We begin with the raw amino-acid sequence, 682 residues long: Pneumocandin biosynthesis cluster protein B (682 aa).

Positions 63–73 (SSLSSTEVTSS) are enriched in low complexity. Disordered stretches follow at residues 63 to 86 (SSLS…DAPE), 107 to 129 (QNTP…DTNQ), and 251 to 358 (SEST…SPAN). Polar residues-rich tracts occupy residues 257–279 (NTGS…SHSS) and 310–320 (PRQTTEATPCD). A compositionally biased stretch (basic and acidic residues) spans 335-349 (PERRSMKMVRKEARD).

In terms of biological role, part of the gene cluster that mediates the biosynthesis of pneumocandins, lipohexapeptides of the echinocandin family that prevent fungal cell wall formation by non-competitive inhibition of beta-1,3-glucan synthase. The 10,12-dimethylmyristoyl side chain is synthesized by the reducing polyketide synthase gloL/GLPKS4. The thioesterase gloN/GLHYD exclusively interacts with gloL/GLPKS4 to maintain turnover of the polyketide side chain. The 10R,12S-dimethylmyristic acid is then transferred to the first thiolation domain of the nonribosomal peptide synthetase gloA/GLNRPS4 by the acyl-AMP ligase gloD/GLligase, followed by its acylation to L-ornithine to trigger elongation of the cyclic hexapeptide. L-ornithine, 4R-hydroxyl-L-proline (generated from L-proline by the dioxygenase gloF/GLOXY2), 3S-hydroxyl-L-homotyrosine (generated by gloG/GLHtyB, gloH/GLHtyA, gloI/GLHtyC, gloJ/GLHtyD and hydroxylated at C-3 by the dioxygenase gloM/GLOXY1), 3R-hydroxyl-L-glutamine (generated from L-glutamine probably by the dioxygenase gloE/GLOXY3) and 3S-hydroxyl-L-proline (generated from L-proline by the dioxygenase gloF/GLOXY2 to yield pneumocandin B0), or 3S-hydroxyl-4S-methyl-L-proline (generated from L-leucine by the dioxygenase gloC/GLOXY4 to yield pneumocandin A0) are sequentially added to the growing chain. The last C domain of gloA/GLNRPS4 is proposed to be responsible for cyclization by condensation to form the peptide bond between L-ornithine and 3S-hydroxyl-4S-methyl-L-proline (for pneumocandin A0) or 3S-hydroxyl-L-proline (for pneumocandin B0). Finally, the subsequent C-4 hydroxylation of 3S-hydroxyl-L-homotyrosine and L-ornithine dihydroxylation at C-4 and C-5 are performed by the cytochrome P450 monooxygenases gloP/GLP450-1 and gloO/GLP450-2, respectively. This chain is Pneumocandin biosynthesis cluster protein B, found in Glarea lozoyensis (strain ATCC 20868 / MF5171).